Reading from the N-terminus, the 230-residue chain is Sugar fermentation stimulation protein homolog (230 aa).

The protein belongs to the SfsA family.

This is Sugar fermentation stimulation protein homolog from Clostridium botulinum (strain Loch Maree / Type A3).